An 857-amino-acid polypeptide reads, in one-letter code: MEAGPSGAAAGAYLPPLQQVFQAPRRPGIGTVGKPIKLLANYFEVDIPKIDVYHYEVDIKPDKCPRRVNREVVEYMVQHFKPQIFGDRKPVYDGKKNIYTVTALPIGNERVDFEVTIPGEGKDRIFKVSIKWLAIVSWRMLHEALVSGQIPVPLESVQALDVAMRHLASMRYTPVGRSFFSPPEGYYHPLGGGREVWFGFHQSVRPAMWKMMLNIDVSATAFYKAQPVIEFMCEVLDIRNIDEQPKPLTDSQRVRFTKEIKGLKVEVTHCGQMKRKYRVCNVTRRPASHQTFPLQLESGQTVECTVAQYFKQKYNLQLKYPHLPCLQVGQEQKHTYLPLEVCNIVAGQRCIKKLTDNQTSTMIKATARSAPDRQEEISRLMKNASYNLDPYIQEFGIKVKDDMTEVTGRVLPAPILQYGGRNRAIATPNQGVWDMRGKQFYNGIEIKVWAIACFAPQKQCREEVLKNFTDQLRKISKDAGMPIQGQPCFCKYAQGADSVEPMFRHLKNTYSGLQLIIVILPGKTPVYAEVKRVGDTLLGMATQCVQVKNVVKTSPQTLSNLCLKINVKLGGINNILVPHQRSAVFQQPVIFLGADVTHPPAGDGKKPSITAVVGSMDAHPSRYCATVRVQRPRQEIIEDLSYMVRELLIQFYKSTRFKPTRIIFYRDGVPEGQLPQILHYELLAIRDACIKLEKDYQPGITYIVVQKRHHTRLFCADKNERIGKSGNIPAGTTVDTNITHPFEFDFYLCSHAGIQGTSRPSHYYVLWDDNRFTADELQILTYQLCHTYVRCTRSVSIPAPAYYARLVAFRARYHLVDKEHDSGEGSHISGQSNGRDPQALAKAVQVHQDTLRTMYFA.

A PAZ domain is found at 227-346 (PVIEFMCEVL…LPLEVCNIVA (120 aa)). 2 interaction with guide RNA regions span residues 309–314 (YFKQKY) and 522–564 (GKTP…LCLK). The 302-residue stretch at 515–816 (LIIVILPGKT…VAFRARYHLV (302 aa)) folds into the Piwi domain. An impairs access of bound RNA to the active site region spans residues 670-675 (PEGQLP). 3 interaction with guide RNA regions span residues 708 to 712 (RHHTR), 751 to 759 (HAGIQGTSR), and 788 to 813 (YVRCTRSVSIPAPAYYARLVAFRARY).

It belongs to the argonaute family. Ago subfamily. Interacts with DDB1, DDX5, DDX6, DHX30, DHX36, DDX47, DICER1, AGO2, ELAVL1, HNRNPF, IGF2BP1, ILF3, IMP8, MATR3, MOV10, PABPC1, PRMT5, RBM4, SART3, TNRC6B, UPF1 and YBX1. Associates with polysomes and messenger ribonucleoproteins (mNRPs). Interacts with LIMD1, WTIP and AJUBA. Interacts with APOBEC3F, APOBEC3G and APOBEC3H. Post-translationally, ubiquitinated on surface-exposed lysines by a SCF-like E3 ubiquitin-protein ligase complex containing ZSWIM8 during target-directed microRNA degradation (TDMD), a process that mediates degradation of microRNAs (miRNAs). Ubiquitination by the SCF-like E3 ubiquitin-protein ligase complex containing ZSWIM8 leads to its subsequent degradation, thereby exposing miRNAs for degradation. ZSWIM8 recognizes and binds AGO1 when it is engaged with a TDMD target.

It localises to the cytoplasm. The protein resides in the P-body. Functionally, required for RNA-mediated gene silencing (RNAi). Binds to short RNAs such as microRNAs (miRNAs) or short interfering RNAs (siRNAs), and represses the translation of mRNAs which are complementary to them. Lacks endonuclease activity and does not appear to cleave target mRNAs. Also required for transcriptional gene silencing (TGS) of promoter regions which are complementary to bound short antigene RNAs (agRNAs). This chain is Protein argonaute-1 (AGO1), found in Homo sapiens (Human).